We begin with the raw amino-acid sequence, 329 residues long: tRNA N6-adenosine threonylcarbamoyltransferase (329 aa).

Fe cation-binding residues include H108, H112, and Y129. Residues Y129–G133, D161, E182, and S261 contribute to the substrate site. D289 lines the Fe cation pocket.

The protein belongs to the KAE1 / TsaD family. The cofactor is Fe(2+).

It is found in the cytoplasm. It carries out the reaction L-threonylcarbamoyladenylate + adenosine(37) in tRNA = N(6)-L-threonylcarbamoyladenosine(37) in tRNA + AMP + H(+). Its function is as follows. Required for the formation of a threonylcarbamoyl group on adenosine at position 37 (t(6)A37) in tRNAs that read codons beginning with adenine. Is probably involved in the transfer of the threonylcarbamoyl moiety of threonylcarbamoyl-AMP (TC-AMP) to the N6 group of A37. The chain is tRNA N6-adenosine threonylcarbamoyltransferase from Ignicoccus hospitalis (strain KIN4/I / DSM 18386 / JCM 14125).